We begin with the raw amino-acid sequence, 485 residues long: Aspartyl/glutamyl-tRNA(Asn/Gln) amidotransferase subunit B (485 aa).

This sequence belongs to the GatB/GatE family. GatB subfamily. In terms of assembly, heterotrimer of A, B and C subunits.

It carries out the reaction L-glutamyl-tRNA(Gln) + L-glutamine + ATP + H2O = L-glutaminyl-tRNA(Gln) + L-glutamate + ADP + phosphate + H(+). It catalyses the reaction L-aspartyl-tRNA(Asn) + L-glutamine + ATP + H2O = L-asparaginyl-tRNA(Asn) + L-glutamate + ADP + phosphate + 2 H(+). Allows the formation of correctly charged Asn-tRNA(Asn) or Gln-tRNA(Gln) through the transamidation of misacylated Asp-tRNA(Asn) or Glu-tRNA(Gln) in organisms which lack either or both of asparaginyl-tRNA or glutaminyl-tRNA synthetases. The reaction takes place in the presence of glutamine and ATP through an activated phospho-Asp-tRNA(Asn) or phospho-Glu-tRNA(Gln). The chain is Aspartyl/glutamyl-tRNA(Asn/Gln) amidotransferase subunit B from Methylacidiphilum infernorum (isolate V4) (Methylokorus infernorum (strain V4)).